Consider the following 139-residue polypeptide: Fluoroacetyl-CoA thioesterase (139 aa).

Residues 40–50 (FATGFMVGLME) and G69 each bind substrate. Residues T42 and E50 contribute to the active site. Residues G69 and 76–77 (HT) contribute to the CoA site. H76 is an active-site residue. R120 provides a ligand contact to substrate.

Homodimer.

It catalyses the reaction fluoroacetyl-CoA + H2O = fluoroacetate + CoA + H(+). In terms of biological role, hydrolyzes fluoroacetyl-CoA before it can react with citrate synthase, and thus confers fluoroacetate resistance. Cannot use acetyl-CoA as substrate. This Streptantibioticus cattleyicolor (Streptomyces cattleya) protein is Fluoroacetyl-CoA thioesterase (flK).